The following is a 463-amino-acid chain: ATP synthase subunit beta (463 aa).

152–159 (GGAGVGKT) serves as a coordination point for ATP.

The protein belongs to the ATPase alpha/beta chains family. In terms of assembly, F-type ATPases have 2 components, CF(1) - the catalytic core - and CF(0) - the membrane proton channel. CF(1) has five subunits: alpha(3), beta(3), gamma(1), delta(1), epsilon(1). CF(0) has three main subunits: a(1), b(2) and c(9-12). The alpha and beta chains form an alternating ring which encloses part of the gamma chain. CF(1) is attached to CF(0) by a central stalk formed by the gamma and epsilon chains, while a peripheral stalk is formed by the delta and b chains.

Its subcellular location is the cell inner membrane. The enzyme catalyses ATP + H2O + 4 H(+)(in) = ADP + phosphate + 5 H(+)(out). Produces ATP from ADP in the presence of a proton gradient across the membrane. The catalytic sites are hosted primarily by the beta subunits. This chain is ATP synthase subunit beta, found in Shewanella baltica (strain OS223).